The primary structure comprises 329 residues: Centromere protein L (329 aa).

Phosphoserine occurs at positions 40 and 54.

The protein belongs to the CENP-L/IML3 family. As to quaternary structure, component of the CENPA-CAD complex, composed of CENPI, CENPK, CENPL, CENPO, CENPP, CENPQ, CENPR and CENPS. The CENPA-CAD complex interacts with the CENPA-NAC complex, at least composed of CENPA, CENPC, CENPH, CENPM, CENPN, CENPT and CENPU.

It is found in the nucleus. The protein resides in the chromosome. Its subcellular location is the centromere. Its function is as follows. Component of the CENPA-CAD (nucleosome distal) complex, a complex recruited to centromeres which is involved in assembly of kinetochore proteins, mitotic progression and chromosome segregation. May be involved in incorporation of newly synthesized CENPA into centromeres via its interaction with the CENPA-NAC complex. The protein is Centromere protein L (Cenpl) of Mus musculus (Mouse).